The sequence spans 430 residues: Type II methyltransferase M.Sau96I (430 aa).

The region spanning 9-63 (IEKMKNQNIKTQTELAEKIDISKSQLSFMFSDEYEPLKKNVIKLADVLKVSPNDI) is the HTH cro/C1-type domain. The SAM-dependent MTase C5-type domain maps to 99–429 (YNVFETFAGA…KSLVHYLNQF (331 aa)). Cys-174 is an active-site residue.

It belongs to the class I-like SAM-binding methyltransferase superfamily. C5-methyltransferase family.

It carries out the reaction a 2'-deoxycytidine in DNA + S-adenosyl-L-methionine = a 5-methyl-2'-deoxycytidine in DNA + S-adenosyl-L-homocysteine + H(+). Functionally, a methylase that recognizes the double-stranded sequence 5'-GGNCC-3', methylates C-4 on both strands, and protects the DNA from cleavage by the Sau96I endonuclease. This Staphylococcus aureus protein is Type II methyltransferase M.Sau96I.